The following is a 610-amino-acid chain: DNA mismatch repair protein MutL (610 aa).

The protein belongs to the DNA mismatch repair MutL/HexB family.

Functionally, this protein is involved in the repair of mismatches in DNA. It is required for dam-dependent methyl-directed DNA mismatch repair. May act as a 'molecular matchmaker', a protein that promotes the formation of a stable complex between two or more DNA-binding proteins in an ATP-dependent manner without itself being part of a final effector complex. The protein is DNA mismatch repair protein MutL of Rickettsia canadensis (strain McKiel).